We begin with the raw amino-acid sequence, 433 residues long: tRNA-2-methylthio-N(6)-dimethylallyladenosine synthase (433 aa).

The MTTase N-terminal domain maps to 3-118; that stretch reads KKLFIQTLGC…ISTAVKTPKF (116 aa). The [4Fe-4S] cluster site is built by C12, C49, C81, C150, C154, and C157. The 234-residue stretch at 136–369 folds into the Radical SAM core domain; sequence RGSPYKSHIN…QSRHNEILDE (234 aa). The TRAM domain maps to 372-433; it reads AAQEGKILDV…RMVLYGELAN (62 aa).

The protein belongs to the methylthiotransferase family. MiaB subfamily. As to quaternary structure, monomer. It depends on [4Fe-4S] cluster as a cofactor.

The protein resides in the cytoplasm. The enzyme catalyses N(6)-dimethylallyladenosine(37) in tRNA + (sulfur carrier)-SH + AH2 + 2 S-adenosyl-L-methionine = 2-methylsulfanyl-N(6)-dimethylallyladenosine(37) in tRNA + (sulfur carrier)-H + 5'-deoxyadenosine + L-methionine + A + S-adenosyl-L-homocysteine + 2 H(+). In terms of biological role, catalyzes the methylthiolation of N6-(dimethylallyl)adenosine (i(6)A), leading to the formation of 2-methylthio-N6-(dimethylallyl)adenosine (ms(2)i(6)A) at position 37 in tRNAs that read codons beginning with uridine. The chain is tRNA-2-methylthio-N(6)-dimethylallyladenosine synthase from Campylobacter curvus (strain 525.92).